Here is a 513-residue protein sequence, read N- to C-terminus: Melianol synthase CYP71BQ4 (513 aa).

A helical membrane pass occupies residues 10–30; that stretch reads MLHLPSLPVLLSFLLFLLMLI. Position 451 (cysteine 451) interacts with heme.

This sequence belongs to the cytochrome P450 family. Requires heme as cofactor. In terms of tissue distribution, accumulates in mature fruits and in juice vesicles.

The protein resides in the membrane. The enzyme catalyses dihydroniloticin + 2 reduced [NADPH--hemoprotein reductase] + 2 O2 = melianol + 2 oxidized [NADPH--hemoprotein reductase] + 3 H2O + 2 H(+). Its pathway is secondary metabolite biosynthesis; terpenoid biosynthesis. Its function is as follows. Monooxygenase involved in the biosynthesis of limonoids triterpene natural products such as limonin, a compound with insecticidal activity responsible for the bitter taste in citrus. Catalyzes the conversion of dihydroniloticin to the protolimonoid melianol. This Citrus sinensis (Sweet orange) protein is Melianol synthase CYP71BQ4.